Here is an 877-residue protein sequence, read N- to C-terminus: Alanine--tRNA ligase (877 aa).

The Zn(2+) site is built by His-562, His-566, Cys-664, and His-668.

Belongs to the class-II aminoacyl-tRNA synthetase family. Requires Zn(2+) as cofactor.

It localises to the cytoplasm. It catalyses the reaction tRNA(Ala) + L-alanine + ATP = L-alanyl-tRNA(Ala) + AMP + diphosphate. Catalyzes the attachment of alanine to tRNA(Ala) in a two-step reaction: alanine is first activated by ATP to form Ala-AMP and then transferred to the acceptor end of tRNA(Ala). Also edits incorrectly charged Ser-tRNA(Ala) and Gly-tRNA(Ala) via its editing domain. This chain is Alanine--tRNA ligase, found in Synechocystis sp. (strain ATCC 27184 / PCC 6803 / Kazusa).